The following is a 91-amino-acid chain: Large ribosomal subunit protein eL34 (91 aa).

The segment at 48-71 is disordered; it reads RGRPVEMRKLPKTKKRPERPYPHL.

The protein belongs to the eukaryotic ribosomal protein eL34 family.

This is Large ribosomal subunit protein eL34 (rpl34e) from Pyrococcus abyssi (strain GE5 / Orsay).